The sequence spans 151 residues: Ribonuclease P protein component (151 aa).

A disordered region spans residues 1-62 (MDEKDLATQP…LKGDSAFRRL (62 aa)). The segment covering 28-48 (GAQGAEAQAAEGPLAAHAQGA) has biased composition (low complexity).

Belongs to the RnpA family. In terms of assembly, consists of a catalytic RNA component (M1 or rnpB) and a protein subunit.

It carries out the reaction Endonucleolytic cleavage of RNA, removing 5'-extranucleotides from tRNA precursor.. Its function is as follows. RNaseP catalyzes the removal of the 5'-leader sequence from pre-tRNA to produce the mature 5'-terminus. It can also cleave other RNA substrates such as 4.5S RNA. The protein component plays an auxiliary but essential role in vivo by binding to the 5'-leader sequence and broadening the substrate specificity of the ribozyme. This Thermus oshimai protein is Ribonuclease P protein component.